Here is a 4660-residue protein sequence, read N- to C-terminus: Low-density lipoprotein receptor-related protein 2 (4660 aa).

An N-terminal signal peptide occupies residues 1 to 25; that stretch reads MERGAAAAAWMLLLAIAACLAPVSG. The Extracellular segment spans residues 26–4425; the sequence is QECGSGNFRC…LSRGIPPGTT (4400 aa). 7 consecutive LDL-receptor class A domains span residues 27–63, 66–104, 107–143, 146–180, 182–218, 221–257, and 264–307; these read ECGS…IGCP, SCGS…QNCP, TCSS…RNCY, TCDQ…ANCT, LCSQ…HNCN, TCGG…DGCE, and TCYP…RYCG. 21 cysteine pairs are disulfide-bonded: C28–C40, C35–C53, C47–C62, C67–C80, C74–C93, C87–C103, C108–C120, C115–C133, C127–C142, C147–C157, C152–C170, C164–C179, C183–C195, C190–C208, C202–C217, C222–C234, C229–C247, C241–C256, C265–C278, C272–C291, and C285–C306. N159 and N178 each carry an N-linked (GlcNAc...) asparagine glycan. N-linked (GlcNAc...) asparagine glycosylation is found at N299, N340, N387, and N462. LDL-receptor class B repeat units lie at residues 435 to 477, 478 to 520, 521 to 567, and 568 to 612; these read HRVF…DWIN, NKLY…DPTV, GYLF…DLVS, and KRVY…FEEH. N-linked (GlcNAc...) asparagine glycosylation is present at N657. LDL-receptor class B repeat units lie at residues 752-794, 795-836, 837-880, and 881-924; these read STIF…DWIS, RNLY…HPAA, GYMF…DWST, and SRLY…FKDN. A glycan (N-linked (GlcNAc...) asparagine) is linked at N865. Residues 1024–1060 form the LDL-receptor class A 8 domain; it reads QCGSSSFPCNNGKCVPSIFRCDGVDDCHDNSDEHQCG. Cystine bridges form between C1025–C1037, C1032–C1050, and C1044–C1059. N-linked (GlcNAc...) asparagine glycosylation is present at N1063. LDL-receptor class A domains follow at residues 1065–1102, 1109–1145, 1149–1185, 1187–1224, 1230–1268, 1271–1307, and 1312–1350; these read TCSS…QNCP, TCPP…KNCQ, TCHP…AGCV, NCTS…AGCP, MCHP…NGCV, TCSP…KDCP, and HCPS…PLCN. Cystine bridges form between C1066–C1079, C1073–C1092, C1086–C1101, C1110–C1122, C1117–C1135, C1129–C1144, C1150–C1162, C1157–C1175, and C1169–C1184. Ca(2+) contacts are provided by W1127, D1130, D1132, D1134, D1140, and E1141. The N-linked (GlcNAc...) asparagine glycan is linked to N1187. 18 disulfide bridges follow: C1188/C1201, C1195/C1214, C1208/C1223, C1231/C1244, C1238/C1257, C1251/C1267, C1272/C1284, C1279/C1297, C1291/C1306, C1313/C1326, C1320/C1339, C1333/C1349, C1354/C1365, C1361/C1374, C1376/C1389, C1395/C1405, C1401/C1414, and C1416/C1429. Residues Y1206, D1209, V1211, D1213, D1219, and E1220 each coordinate Ca(2+). N-linked (GlcNAc...) asparagine glycosylation is found at N1328 and N1341. Positions 1350 to 1390 constitute an EGF-like 1 domain; sequence NQDSCLHFNGGCTHRCIQGPFGATCVCPIGYQLANDTKTCE. The N-linked (GlcNAc...) asparagine glycan is linked to N1384. In terms of domain architecture, EGF-like 2; calcium-binding spans 1391–1430; sequence DVNECDIPGFCSQHCVNMRGSFRCACDPEYTLESDGRTCK. N-linked (GlcNAc...) asparagine glycosylation is found at N1451, N1497, and N1551. LDL-receptor class B repeat units follow at residues 1479-1521, 1522-1564, 1567-1610, 1611-1655, and 1656-1696; these read GRVF…DWIG, RNIY…DPRM, NVMF…DYPN, RLIY…FEDS, and VFWT…IHPS. 3 N-linked (GlcNAc...) asparagine glycosylation sites follow: N1676, N1733, and N1811. LDL-receptor class B repeat units follow at residues 1791–1833, 1834–1883, 1884–1931, 1932–1973, 1974–2014, 2108–2157, 2158–2202, 2203–2246, 2247–2290, and 2291–2333; these read QFIY…DWVS, RNIY…DPAR, GKLY…DIQE, QKLY…HGSF, LYYS…YHHR, GFIY…DWVA, GNLY…DPKH, RYLF…DHDT, GYIY…FGES, and IIWV…FDEH. N-linked (GlcNAc...) asparagine glycosylation is found at N2131, N2134, N2178, and N2225. N-linked (GlcNAc...) asparagine glycosylation is present at N2396. 5 LDL-receptor class B repeats span residues 2432–2478, 2479–2519, 2520–2563, 2564–2605, and 2606–2647; these read NRIF…DWIN, RRIY…DPCR, GYMY…DLET, DLLY…YGQY, and IYWT…VVKT. N2488 and N2548 each carry an N-linked (GlcNAc...) asparagine glycan. LDL-receptor class A domains lie at 2700–2738, 2741–2777, 2780–2819, 2822–2861, 2864–2902, 2907–2946, 2949–2991, 2994–3030, 3033–3071, and 3076–3112; these read RCNQ…TVCA, TCRS…AGCL, SCNS…KNCP, TCQP…IYCA, TCRS…DTCG, SCSA…HHCE, NCSS…QNCT, ACST…RGCS, PCRD…HLCH, and TCPP…KGCG. Cystine bridges form between C2701-C2713, C2708-C2726, C2720-C2737, C2742-C2754, C2749-C2767, C2761-C2776, C2781-C2794, C2789-C2807, C2801-C2818, C2823-C2836, C2830-C2849, C2843-C2860, C2865-C2878, C2872-C2891, C2885-C2901, C2908-C2920, C2915-C2933, and C2927-C2945. Residue N2782 is glycosylated (N-linked (GlcNAc...) asparagine). An N-linked (GlcNAc...) asparagine glycan is attached at N2810. N2949 is a glycosylation site (N-linked (GlcNAc...) asparagine). Intrachain disulfides connect C2950–C2967, C2957–C2980, C2974–C2990, C2995–C3007, C3002–C3020, C3014–C3029, C3034–C3046, C3041–C3059, C3053–C3070, C3077–C3089, C3084–C3102, C3096–C3111, C3116–C3128, C3124–C3137, C3139–C3152, C3158–C3169, C3165–C3178, and C3180–C3193. The N-linked (GlcNAc...) asparagine glycan is linked to N2989. One can recognise an EGF-like 3 domain in the interval 3112–3153; the sequence is GINECQDSSISHCDHNCTDTITSFYCSCLPGYKLMSDKRTCV. N3127 carries N-linked (GlcNAc...) asparagine glycosylation. The EGF-like 4; calcium-binding domain occupies 3154 to 3194; sequence DIDECKETPQLCSQKCENVIGSYICKCAPGYIREPDGKSCR. N3213, N3259, N3317, and N3357 each carry an N-linked (GlcNAc...) asparagine glycan. LDL-receptor class B repeat units lie at residues 3241-3283, 3284-3326, 3335-3378, 3379-3421, and 3422-3462; these read ERLY…DWVS, RKLY…ENPR, GYVY…DYTN, DLLY…FEDT, and VFWT…LHPY. A glycan (N-linked (GlcNAc...) asparagine) is linked at N3448. LDL-receptor class A domains lie at 3513–3551, 3554–3592, 3595–3633, 3636–3674, 3679–3717, 3720–3757, 3760–3796, and 3799–3835; these read MCSS…DLCP, FCRL…VLCE, RCEA…SHCA, TCRP…HECM, NCDN…QGCE, PCHP…ESCV, ECTE…RDCE, and TCHP…SACP. Cystine bridges form between C3514-C3527, C3521-C3540, C3534-C3550, C3555-C3567, C3562-C3580, C3574-C3591, C3596-C3608, C3603-C3621, C3615-C3632, C3637-C3649, C3644-C3662, C3656-C3673, C3680-C3694, C3688-C3707, C3701-C3716, C3721-C3734, C3729-C3747, C3741-C3756, C3761-C3773, C3768-C3786, C3780-C3795, C3800-C3812, C3807-C3825, and C3819-C3834. N-linked (GlcNAc...) asparagine glycosylation is present at N3566. N3682 carries an N-linked (GlcNAc...) asparagine glycan. N-linked (GlcNAc...) asparagine glycosylation is present at N3840. LDL-receptor class A domains lie at 3843-3881, 3884-3923, and 3929-3965; these read YCPA…HLCF, PCES…EHCR, and PCTD…TGCN. Intrachain disulfides connect C3844–C3856, C3851–C3869, C3863–C3880, C3885–C3898, C3893–C3911, C3905–C3922, C3930–C3942, C3937–C3955, and C3949–C3964. N-linked (GlcNAc...) asparagine glycans are attached at residues N3969 and N3980. The 42-residue stretch at 4009-4050 folds into the EGF-like 5; calcium-binding domain; that stretch reads DINECEEFGICPQSCRNSKGSYECFCVDGFKSMSTHYGERCA. Disulfide bonds link C4013–C4023, C4019–C4032, and C4034–C4049. A glycan (N-linked (GlcNAc...) asparagine) is linked at N4070. LDL-receptor class B repeat units lie at residues 4156-4198, 4199-4242, and 4244-4285; these read RHIY…NPKL, GLMF…DYLN, and DRIY…FEDQ. An N-linked (GlcNAc...) asparagine glycan is attached at N4329. The EGF-like 6 domain maps to 4379–4413; that stretch reads MPSPCRCMHGGSCYFDENDLPKCKCSSGYSGEYCE. 3 disulfides stabilise this stretch: C4383/C4391, C4385/C4401, and C4403/C4412. The helical transmembrane segment at 4426–4446 threads the bilayer; that stretch reads MALLLTFAMVIIVGALVLVGF. The Cytoplasmic portion of the chain corresponds to 4447-4660; that stretch reads FHYRKTGSLL…ANLVKEDSDV (214 aa). The SH3-binding motif lies at 4454–4463; it reads SLLPSLPKLP. A PxLPxI/L motif 1; mediates interaction with ANKRA2 motif is present at residues 4457–4462; the sequence is PSLPKL. The PxLPxI/L motif 2; mediates interaction with ANKRA2 motif lies at 4460 to 4465; the sequence is PKLPSL. Phosphoserine occurs at positions 4464 and 4467. An Endocytosis signal motif is present at residues 4522–4527; it reads FENPMY. A disordered region spans residues 4558 to 4660; that stretch reads QNYGRSIDPS…ANLVKEDSDV (103 aa). S4577 carries the phosphoserine modification. The segment at 4597-4610 is interaction with DAB2; that stretch reads QTTNFENPIYAEMD. The NPXY motif signature appears at 4603 to 4606; that stretch reads NPIY. The SH2-binding motif lies at 4606 to 4609; sequence YAEM. The SH3-binding motif lies at 4619 to 4630; sequence VAPPPSPSLPAK. A Phosphoserine modification is found at S4624. Residues 4627-4636 show a composition bias toward low complexity; that stretch reads LPAKASKRSS. At T4637 the chain carries Phosphothreonine. S4658 is modified (phosphoserine).

It belongs to the LDLR family. Binds plasminogen, extracellular matrix components, plasminogen activator-plasminogen activator inhibitor type I complex, apolipoprotein E-enriched beta-VLDL, lipoprotein lipase, lactoferrin, CLU/clusterin and calcium. Forms a multimeric complex together with LRPAP1. Interacts (via PxLPxI/L motif) with ANKRA2 (via ankyrin repeats). Interacts with LRP2BP. Interacts (via NPXY motif) with DAB2; the interaction is not affected by tyrosine phosphorylation of the NPXY motif. Interacts with MB. Interacts with BMP4. Interacts with the Sonic hedgehog protein N-product which is the active product of SHH. Interacts with CST3 in a calcium-dependent manner. Interacts with the vitamin-D binding protein GC/DBP. Interacts with sex hormone-binding protein SHBG. Interacts with angiotensin-2. Also interacts with angiotensin 1-7. Interacts with APOM. Interacts with selenoprotein SEPP1. Interacts with LEP. Interacts with ALB. Interacts with the antiapoptotic protein BIRC5/survivin. Interacts with matrix metalloproteinase MMP2 in complex with metalloproteinase inhibitor TIMP1. In neurons, forms a trimeric complex with APP and APPB1/FE65. Interacts with LDLRAP1/ARH; mediates trafficking of LRP2 to the endocytic recycling compartment. Does not interact with beta-amyloid protein 40 alone but interacts with the complex composed of beta-amyloid protein 40 and CLU/APOJ. Interacts with MDK. Post-translationally, a fraction undergoes proteolytic cleavage of the extracellular domain at the cell membrane to generate a cytoplasmic tail fragment. This is internalized into the early endosome from where it trafficks in an LDLRAP1/ARH-dependent manner to the endocytic recycling compartment (ERC). In the ERC, it is further cleaved by gamma-secretase to release a fragment which translocates to the nucleus and mediates transcriptional repression. In terms of processing, N-glycosylation is required for ligand binding. Contains core-fucosylated N-glycans in kidney proximal convoluted tubules (PCTs) and hybrid-type N-glycans in proximal straight tubules (PSTs). Interacts with ligands in a glycoform-dependent manner. Retinol-binding protein and the vitamin D carrier GC/DBP are endocytosed primarily by PCTs, albumin is endocytosed equally by PCTs and PSTs, and the aminoglycoside kanamycin is endocytosed primarily by PSTs. In terms of tissue distribution, in the inner ear, strongly expressed in the marginal cells of the stria vascularis (at protein level). In the female reproductive tract, expressed on the luminal side of the uterine epithelium (at protein level). In the adult brain, expressed in ependymal cells of the lateral ventricles where expression is restricted to the ependyma that faces the stem cell niche (at protein level). Expressed in neurons throughout the brain including in the hippocampus, limbic cortices and cerebellum (at protein level). In the developing optic nerve, expressed exclusively in astrocytes at 14.5 dpc, 16.5 dpc and 18.5 dpc (at protein level).

The protein resides in the apical cell membrane. It is found in the endosome lumen. It localises to the membrane. The protein localises to the coated pit. Its subcellular location is the cell projection. The protein resides in the dendrite. It is found in the axon. Multiligand endocytic receptor. Acts together with CUBN to mediate endocytosis of high-density lipoproteins. Mediates receptor-mediated uptake of polybasic drugs such as aprotinin, aminoglycosides and polymyxin B. In the kidney, mediates the tubular uptake and clearance of leptin. Also mediates transport of leptin across the blood-brain barrier through endocytosis at the choroid plexus epithelium. Endocytosis of leptin in neuronal cells is required for hypothalamic leptin signaling and leptin-mediated regulation of feeding and body weight. Mediates endocytosis and subsequent lysosomal degradation of CST3 in kidney proximal tubule cells. Mediates renal uptake of 25-hydroxyvitamin D3 in complex with the vitamin D3 transporter GC/DBP. Mediates renal uptake of metallothionein-bound heavy metals. Together with CUBN, mediates renal reabsorption of myoglobin. Mediates renal uptake and subsequent lysosomal degradation of APOM. Plays a role in kidney selenium homeostasis by mediating renal endocytosis of selenoprotein SEPP1. Mediates renal uptake of the antiapoptotic protein BIRC5/survivin which may be important for functional integrity of the kidney. Mediates renal uptake of matrix metalloproteinase MMP2 in complex with metalloproteinase inhibitor TIMP1. Mediates endocytosis of Sonic hedgehog protein N-product (ShhN), the active product of SHH. Also mediates ShhN transcytosis. In the embryonic neuroepithelium, mediates endocytic uptake and degradation of BMP4, is required for correct SHH localization in the ventral neural tube and plays a role in patterning of the ventral telencephalon. Required at the onset of neurulation to sequester SHH on the apical surface of neuroepithelial cells of the rostral diencephalon ventral midline and to control PTCH1-dependent uptake and intracellular trafficking of SHH. During neurulation, required in neuroepithelial cells for uptake of folate bound to the folate receptor FOLR1 which is necessary for neural tube closure. In the adult brain, negatively regulates BMP signaling in the subependymal zone which enables neurogenesis to proceed. In astrocytes, mediates endocytosis of ALB which is required for the synthesis of the neurotrophic factor oleic acid. Involved in neurite branching. During optic nerve development, required for SHH-mediated migration and proliferation of oligodendrocyte precursor cells. Mediates endocytic uptake and clearance of SHH in the retinal margin which protects retinal progenitor cells from mitogenic stimuli and keeps them quiescent. Plays a role in reproductive organ development by mediating uptake in reproductive tissues of androgen and estrogen bound to the sex hormone binding protein SHBG. Mediates endocytosis of angiotensin-2. Also mediates endocytosis of angiotensin 1-7. Binds to the complex composed of beta-amyloid protein 40 and CLU/APOJ and mediates its endocytosis and lysosomal degradation. Required for embryonic heart development. Required for normal hearing, possibly through interaction with estrogen in the inner ear. This Mus musculus (Mouse) protein is Low-density lipoprotein receptor-related protein 2 (Lrp2).